The following is a 153-amino-acid chain: Endoribonuclease YbeY (153 aa).

Positions 113, 117, and 123 each coordinate Zn(2+).

It belongs to the endoribonuclease YbeY family. Requires Zn(2+) as cofactor.

The protein resides in the cytoplasm. Its function is as follows. Single strand-specific metallo-endoribonuclease involved in late-stage 70S ribosome quality control and in maturation of the 3' terminus of the 16S rRNA. The sequence is that of Endoribonuclease YbeY from Aliivibrio salmonicida (strain LFI1238) (Vibrio salmonicida (strain LFI1238)).